We begin with the raw amino-acid sequence, 274 residues long: 2,3,4,5-tetrahydropyridine-2,6-dicarboxylate N-succinyltransferase (274 aa).

Substrate is bound by residues R104 and D141.

Belongs to the transferase hexapeptide repeat family. In terms of assembly, homotrimer.

The protein localises to the cytoplasm. The catalysed reaction is (S)-2,3,4,5-tetrahydrodipicolinate + succinyl-CoA + H2O = (S)-2-succinylamino-6-oxoheptanedioate + CoA. It functions in the pathway amino-acid biosynthesis; L-lysine biosynthesis via DAP pathway; LL-2,6-diaminopimelate from (S)-tetrahydrodipicolinate (succinylase route): step 1/3. This Enterobacter sp. (strain 638) protein is 2,3,4,5-tetrahydropyridine-2,6-dicarboxylate N-succinyltransferase.